The chain runs to 121 residues: Ribosome-binding factor A (121 aa).

It belongs to the RbfA family. In terms of assembly, monomer. Binds 30S ribosomal subunits, but not 50S ribosomal subunits or 70S ribosomes.

It is found in the cytoplasm. In terms of biological role, one of several proteins that assist in the late maturation steps of the functional core of the 30S ribosomal subunit. Associates with free 30S ribosomal subunits (but not with 30S subunits that are part of 70S ribosomes or polysomes). Required for efficient processing of 16S rRNA. May interact with the 5'-terminal helix region of 16S rRNA. This chain is Ribosome-binding factor A, found in Clostridium kluyveri (strain NBRC 12016).